We begin with the raw amino-acid sequence, 20 residues long: Beta-fibrinogenase jerdofibrase (20 aa).

The Peptidase S1 domain occupies 1-20 (VIGGDECNINEHPFLVLVYY).

The protein belongs to the peptidase S1 family. Snake venom subfamily. In terms of assembly, monomer. As to expression, expressed by the venom gland.

It localises to the secreted. Inhibited by PMSF and soybean trypsin inhibitor. Partially inhibited by DTT and cysteine. Not affected by EDTA. Fibrin(ogen)olytic serine protease degrades Bbeta-chain of human fibrinogen (FGB) and shows a lower activity on Aa-chain (FGA). Also degrades fibrin directly. Releases fibrinopeptide B and a small amount of fibrinopeptide A. Has also be shown to catalyze the hydrolysis of some chromogenic substrates such as S2238, S2160, S2302 and S2251. The sequence is that of Beta-fibrinogenase jerdofibrase from Protobothrops jerdonii (Jerdon's pitviper).